The following is a 242-amino-acid chain: Demethylmenaquinone methyltransferase (242 aa).

2 residues coordinate S-adenosyl-L-methionine: threonine 74 and aspartate 93.

It belongs to the class I-like SAM-binding methyltransferase superfamily. MenG/UbiE family.

It carries out the reaction a 2-demethylmenaquinol + S-adenosyl-L-methionine = a menaquinol + S-adenosyl-L-homocysteine + H(+). It functions in the pathway quinol/quinone metabolism; menaquinone biosynthesis; menaquinol from 1,4-dihydroxy-2-naphthoate: step 2/2. Its function is as follows. Methyltransferase required for the conversion of demethylmenaquinol (DMKH2) to menaquinol (MKH2). The protein is Demethylmenaquinone methyltransferase of Chlorobaculum tepidum (strain ATCC 49652 / DSM 12025 / NBRC 103806 / TLS) (Chlorobium tepidum).